A 590-amino-acid polypeptide reads, in one-letter code: Arginine--tRNA ligase (590 aa).

The short motif at 134 to 144 (ANPTGPMHVGH) is the 'HIGH' region element.

The protein belongs to the class-I aminoacyl-tRNA synthetase family. Monomer.

It localises to the cytoplasm. It carries out the reaction tRNA(Arg) + L-arginine + ATP = L-arginyl-tRNA(Arg) + AMP + diphosphate. The chain is Arginine--tRNA ligase from Beijerinckia indica subsp. indica (strain ATCC 9039 / DSM 1715 / NCIMB 8712).